The sequence spans 710 residues: MGNSGSKQHTKHNSKKDDHDGDRKKTLDLPPLTKSDTTHSLKSSRSLRSLRSKRSEASLASNVQAQTQPLSRRSSTLGNGNRNHRRSNNAPITPPNNHYLTSHPSSSRRLSSSSRRSSMGNNNNSELPPSMIQMEPKSPILKNSTSMHSTSSFNSYENALTDDDDDRGDDGGESPSMAKVTRINTSSSADRGSKRTPLRRHNSLQPEKGVTGFSSTSSKLRRRSDNTLPASYPLNAEAGGNGSDYFSNRSNSHASSRKSSFGSTGNTAYSTPLHSPALRKMSSRDNDDSGDNVNGRGTSPIPNLNIDKPSPSASSASKREYLSAYPTLAHRDSSSSLSPRGKGQRSSSSSSSSQRIYVSPPSPTGDFVHGSCADGDNGSRTNTMVEMKRKKPVRPVDIDEIIQRLLDAGYAAKRTKNVCLKNSEIIQICHKARELFLAQPALLELSPSVKIVGDVHGQYADLLRLFTKCGFPPMANYLFLGDYVDRGKQSLETILLLLCYKIKYPENFFLLRGNHECANVTRVYGFYDECKRRCNIKIWKTFVDTFNTLPLAAIVTGKIFCVHGGLSPVLNSMDEIRHVSRPTDVPDFGLINDLLWSDPTDSSNEWEDNERGVSFCYNKVAINKFLNKFGFDLVCRAHMVVEDGYEFFNDRSLVTVFSAPNYCGEFDNWGAVMTVSEGLLCSFELLDPLDSTALKQVMKKGRQERKLANR.

The disordered stretch occupies residues 1 to 382; it reads MGNSGSKQHT…ADGDNGSRTN (382 aa). Gly-2 carries N-myristoyl glycine lipidation. The span at 15 to 27 shows a compositional bias: basic and acidic residues; the sequence is KKDDHDGDRKKTL. The span at 40 to 49 shows a compositional bias: low complexity; that stretch reads SLKSSRSLRS. 2 positions are modified to phosphoserine: Ser-55 and Ser-71. Composition is skewed to polar residues over residues 62-77 and 95-104; these read NVQAQTQPLSRRSSTL and PNNHYLTSHP. Low complexity-rich tracts occupy residues 105–125 and 143–155; these read SSSRRLSSSSRRSSMGNNNNS and NSTSMHSTSSFNS. The span at 160-172 shows a compositional bias: acidic residues; it reads LTDDDDDRGDDGG. Thr-161 is subject to Phosphothreonine. Residues Ser-203 and Ser-224 each carry the phosphoserine modification. Residues 247–260 show a composition bias toward low complexity; it reads SNRSNSHASSRKSS. Residues 261 to 273 are compositionally biased toward polar residues; it reads FGSTGNTAYSTPL. The residue at position 271 (Thr-271) is a Phosphothreonine. Ser-275 carries the phosphoserine modification. A compositionally biased stretch (polar residues) spans 291-302; sequence DNVNGRGTSPIP. Ser-310 carries the post-translational modification Phosphoserine. Residues Asp-454, His-456, Asp-482, and Asn-514 each coordinate Mn(2+). The active-site Proton donor is the His-515. His-563 and His-638 together coordinate Mn(2+).

The protein belongs to the PPP phosphatase family. PP-Z subfamily. Mn(2+) serves as cofactor.

It catalyses the reaction O-phospho-L-seryl-[protein] + H2O = L-seryl-[protein] + phosphate. The enzyme catalyses O-phospho-L-threonyl-[protein] + H2O = L-threonyl-[protein] + phosphate. Essential for the maintenance of cell size and integrity in response to osmotic stress. In Saccharomyces cerevisiae (strain ATCC 204508 / S288c) (Baker's yeast), this protein is Serine/threonine-protein phosphatase PP-Z2 (PPZ2).